Here is a 316-residue protein sequence, read N- to C-terminus: Probable inactive poly [ADP-ribose] polymerase SRO4 (316 aa).

Residues 1–28 (MDYSKTEETPINEEQGSTNSSESRSNEE) are disordered. Residues 14 to 23 (EQGSTNSSES) show a composition bias toward low complexity. The 228-residue stretch at 28-255 (ELFSDCDQQH…KSPWISFPVL (228 aa)) folds into the PARP catalytic domain. One can recognise an RST domain in the interval 243–314 (KNPKSPWISF…IKSVGQKVHK (72 aa)).

Its subcellular location is the nucleus. Functionally, probable inactive ADP-ribosyltransferase that may be involved in stress and developmental responses. This Arabidopsis thaliana (Mouse-ear cress) protein is Probable inactive poly [ADP-ribose] polymerase SRO4 (SRO4).